A 305-amino-acid polypeptide reads, in one-letter code: ATP synthase gamma chain (305 aa).

The protein belongs to the ATPase gamma chain family. As to quaternary structure, F-type ATPases have 2 components, CF(1) - the catalytic core - and CF(0) - the membrane proton channel. CF(1) has five subunits: alpha(3), beta(3), gamma(1), delta(1), epsilon(1). CF(0) has three main subunits: a, b and c.

The protein localises to the cell membrane. Functionally, produces ATP from ADP in the presence of a proton gradient across the membrane. The gamma chain is believed to be important in regulating ATPase activity and the flow of protons through the CF(0) complex. This is ATP synthase gamma chain from Mycobacterium tuberculosis (strain ATCC 25177 / H37Ra).